Here is a 476-residue protein sequence, read N- to C-terminus: Glycogen synthase (476 aa).

K15 serves as a coordination point for ADP-alpha-D-glucose.

The protein belongs to the glycosyltransferase 1 family. Bacterial/plant glycogen synthase subfamily.

It carries out the reaction [(1-&gt;4)-alpha-D-glucosyl](n) + ADP-alpha-D-glucose = [(1-&gt;4)-alpha-D-glucosyl](n+1) + ADP + H(+). Its pathway is glycan biosynthesis; glycogen biosynthesis. Synthesizes alpha-1,4-glucan chains using ADP-glucose. In Streptococcus gordonii (strain Challis / ATCC 35105 / BCRC 15272 / CH1 / DL1 / V288), this protein is Glycogen synthase.